A 1218-amino-acid chain; its full sequence is Protein jagged-1 (1218 aa).

The signal sequence occupies residues 1–33; it reads MRSPRTRGRSGRPLSLLLALLCALRAKVCGASG. Residues 34–1067 are Extracellular-facing; that stretch reads QFELEILSMQ…QRRPLKNRTD (1034 aa). N-linked (GlcNAc...) asparagine glycosylation is present at N143. The region spanning 185 to 229 is the DSL domain; that stretch reads VTCDDYYYGFGCNKFCRPRDDFFGHYACDQNGNKTCMEGWMGPEC. Disulfide bonds link C187–C196 and C200–C212. The interval 199–207 is important for interaction with NOTCH1; that stretch reads FCRPRDDFF. The N-linked (GlcNAc...) asparagine glycan is linked to N217. Cystine bridges form between C220-C229, C234-C245, C238-C251, C253-C262, C265-C276, C271-C282, C284-C293, C300-C312, C306-C322, C324-C333, C340-C351, C345-C360, C362-C371, C378-C389, C383-C398, C400-C409, C416-C427, C421-C436, C438-C447, C454-C464, C458-C473, C475-C484, C491-C502, C496-C511, C513-C522, C529-C540, C534-C549, C551-C560, C578-C605, C599-C615, C617-C626, C633-C644, C638-C653, C655-C664, C671-C682, C676-C691, C693-C702, C709-C720, C714-C729, and C731-C740. Residues 230 to 263 enclose the EGF-like 1 domain; it reads NRAICRQGCSPKHGSCKLPGDCRCQYGWQGLYCD. Residues 264–294 enclose the EGF-like 2; atypical domain; the sequence is KCIPHPGCVHGICNEPWQCLCETNWGGQLCD. EGF-like domains are found at residues 296 to 334 and 336 to 372; these read DLNY…PNCE and AEHA…PTCS. Residues 374 to 410 form the EGF-like 5; calcium-binding domain; sequence NIDDCSPNNCSHGGTCQDLVNGFKCVCPPQWTGKTCQ. N382 carries N-linked (GlcNAc...) asparagine glycosylation. The EGF-like 6; calcium-binding domain maps to 412–448; sequence DANECEAKPCVNAKSCKNLIASYYCDCLPGWMGQNCD. In terms of domain architecture, EGF-like 7; calcium-binding spans 450-485; it reads NINDCLGQCQNDASCRDLVNGYRCICPPGYAGDHCE. Residues 487–523 form the EGF-like 8; calcium-binding domain; sequence DIDECASNPCLNGGHCQNEINRFQCLCPTGFSGNLCQ. EGF-like domains follow at residues 525-561 and 586-627; these read DIDY…KNCS and DTPE…TYCH. The N-linked (GlcNAc...) asparagine glycan is linked to N559. Positions 629–665 constitute an EGF-like 11; calcium-binding domain; that stretch reads NINDCESNPCRNGGTCIDGVNSYKCICSDGWEGAYCE. One can recognise an EGF-like 12; calcium-binding domain in the interval 667-703; the sequence is NINDCSQNPCHNGGTCRDLVNDFYCDCKNGWKGKTCH. 2 EGF-like domains span residues 705–741 and 744–780; these read RDSQ…TTCN and RNSS…PICA. A glycan (N-linked (GlcNAc...) asparagine) is linked at N745. Disulfide bonds link C748/C759, C753/C768, C770/C779, C786/C797, C791/C806, C808/C817, C824/C835, C829/C844, and C846/C855. In terms of domain architecture, EGF-like 15; calcium-binding spans 782-818; that stretch reads NTNDCSPHPCYNSGTCVDGDNWYRCECAPGFAGPDCR. Residues 820–856 enclose the EGF-like 16; calcium-binding domain; it reads NINECQSSPCAFGATCVDEINGYRCVCPPGHSGAKCQ. 4 N-linked (GlcNAc...) asparagine glycosylation sites follow: N960, N991, N1045, and N1064. The chain crosses the membrane as a helical span at residues 1068 to 1093; it reads FLVPLLSSVLTVAWICCLVTAFYWCL. At 1094–1218 the chain is on the cytoplasmic side; that stretch reads RKRRKPGSHT…QSLNRMEYIV (125 aa). The tract at residues 1152–1218 is disordered; the sequence is HNSEVEEDDM…QSLNRMEYIV (67 aa). Residues 1189–1199 are compositionally biased toward polar residues; that stretch reads TPTKHPNWTNK.

In terms of assembly, interacts with NOTCH2 and NOTCH3. Interacts with NOTCH1 (in the presence of calcium ions). As to expression, widely expressed in adult and fetal tissues. In cervix epithelium expressed in undifferentiated subcolumnar reserve cells and squamous metaplasia. Expression is up-regulated in cervical squamous cell carcinoma. Expressed in bone marrow cell line HS-27a which supports the long-term maintenance of immature progenitor cells.

It is found in the membrane. The protein localises to the cell membrane. Ligand for multiple Notch receptors and involved in the mediation of Notch signaling. May be involved in cell-fate decisions during hematopoiesis. Seems to be involved in early and late stages of mammalian cardiovascular development. Inhibits myoblast differentiation. Enhances fibroblast growth factor-induced angiogenesis (in vitro). The polypeptide is Protein jagged-1 (JAG1) (Homo sapiens (Human)).